A 283-amino-acid chain; its full sequence is Elongation factor Ts (283 aa).

Positions 79–82 are involved in Mg(2+) ion dislocation from EF-Tu; it reads TDFV.

The protein belongs to the EF-Ts family.

The protein localises to the cytoplasm. Associates with the EF-Tu.GDP complex and induces the exchange of GDP to GTP. It remains bound to the aminoacyl-tRNA.EF-Tu.GTP complex up to the GTP hydrolysis stage on the ribosome. The polypeptide is Elongation factor Ts (Pseudoalteromonas translucida (strain TAC 125)).